Reading from the N-terminus, the 348-residue chain is Small ribosomal subunit biogenesis GTPase RsgA (348 aa).

Positions 1 to 32 (MAKQKLTQNQKRRIHSNNAKALDRHRRQTKKQ) are disordered. The CP-type G domain occupies 106 to 274 (KNELSRPDYY…LIDSPGIREF (169 aa)). GTP-binding positions include 162-165 (NKID) and 216-224 (GQSGVGKSS). Zn(2+) is bound by residues Cys298, Cys303, His305, and Cys311.

The protein belongs to the TRAFAC class YlqF/YawG GTPase family. RsgA subfamily. In terms of assembly, monomer. Associates with 30S ribosomal subunit, binds 16S rRNA. It depends on Zn(2+) as a cofactor.

Its subcellular location is the cytoplasm. One of several proteins that assist in the late maturation steps of the functional core of the 30S ribosomal subunit. Helps release RbfA from mature subunits. May play a role in the assembly of ribosomal proteins into the subunit. Circularly permuted GTPase that catalyzes slow GTP hydrolysis, GTPase activity is stimulated by the 30S ribosomal subunit. The polypeptide is Small ribosomal subunit biogenesis GTPase RsgA (Actinobacillus succinogenes (strain ATCC 55618 / DSM 22257 / CCUG 43843 / 130Z)).